A 224-amino-acid chain; its full sequence is Twisted gastrulation protein homolog 1 (224 aa).

Residues 1–26 form the signal peptide; the sequence is MRSPCAALSASLLLLLLLLWARSSVG. N-linked (GlcNAc...) asparagine glycans are attached at residues Asn53, Asn82, and Asn148.

This sequence belongs to the twisted gastrulation protein family. As to quaternary structure, interacts with CHRD and BMP4. This interaction enhances CHRD/BMP4 complex formation. Interacts with BMP7.

It is found in the secreted. Its function is as follows. May be involved in dorsoventral axis formation. Seems to antagonize BMP signaling by forming ternary complexes with CHRD and BMPs, thereby preventing BMPs from binding to their receptors. In addition to the anti-BMP function, also has pro-BMP activity, partly mediated by cleavage and degradation of CHRD, which releases BMPs from ternary complexes. May be an important modulator of BMP-regulated cartilage development and chondrocyte differentiation. May play a role in thymocyte development. In Gallus gallus (Chicken), this protein is Twisted gastrulation protein homolog 1 (TWSG1).